The primary structure comprises 834 residues: Ras GTPase-activating protein 3 (834 aa).

2 C2 domains span residues 1–112 (MAVE…DTWF) and 123–263 (VQGK…EAWY). Position 2 is an N-acetylalanine (Ala-2). Residue Tyr-66 is modified to Phosphotyrosine. Phosphoserine is present on Ser-77. The residue at position 110 (Thr-110) is a Phosphothreonine. Positions 346–561 (GRVVPFISAI…DAVKNFLDLI (216 aa)) constitute a Ras-GAP domain. Positions 576-677 (ILLKEGFMIK…WIDILTKVSQ (102 aa)) constitute a PH domain. The Btk-type zinc-finger motif lies at 679 to 715 (NQKRLTVFHPSAYLNGHWLCCRASSDTAIGCTPCTGG). Zn(2+) contacts are provided by His-687, Cys-698, Cys-699, and Cys-709. 2 positions are modified to phosphoserine: Ser-809 and Ser-833.

In terms of biological role, inhibitory regulator of the Ras-cyclic AMP pathway. Binds inositol tetrakisphosphate (IP4). The chain is Ras GTPase-activating protein 3 (Rasa3) from Rattus norvegicus (Rat).